The chain runs to 461 residues: Trigger factor (461 aa).

The PPIase FKBP-type domain occupies 166 to 245 (GDFANIDLTA…VNSVKAEELP (80 aa)).

It belongs to the FKBP-type PPIase family. Tig subfamily.

It is found in the cytoplasm. It carries out the reaction [protein]-peptidylproline (omega=180) = [protein]-peptidylproline (omega=0). Functionally, involved in protein export. Acts as a chaperone by maintaining the newly synthesized protein in an open conformation. Functions as a peptidyl-prolyl cis-trans isomerase. The polypeptide is Trigger factor (Bifidobacterium animalis subsp. lactis (strain AD011)).